Consider the following 1972-residue polypeptide: Myosin-11 (1972 aa).

S8, S23, and S40 each carry phosphoserine. The Myosin N-terminal SH3-like domain occupies 31–81 (VAKKLVWVPSEKQGFEAASIKEEKGDEVVVELVENGKKVTVGKDDIQKMNP). One can recognise a Myosin motor domain in the interval 85–783 (SKVEDMAELT…VLAHLEEERD (699 aa)). N6,N6,N6-trimethyllysine is present on K129. Position 178–185 (178–185 (GESGAGKT)) interacts with ATP. Actin-binding regions lie at residues 661–683 (LGKL…IPNH) and 762–776 (RIGQ…GVLA). An IQ domain is found at 786–815 (ITDVIMAFQAMCRGYLARKAFTKRQQQLTA). The stretch at 844–1934 (LLQVTRQEEE…KSKLRRGNEA (1091 aa)) forms a coiled coil. Residue T1177 is modified to Phosphothreonine. Phosphoserine is present on residues S1684 and S1722. Residues 1771–1788 (NELATERSTAQKNESARQ) show a composition bias toward polar residues. Disordered regions lie at residues 1771 to 1797 (NELA…NKEL) and 1867 to 1972 (QYKE…KASE). Basic and acidic residues predominate over residues 1867-1876 (QYKEQAEKGN). A C-terminal region spans residues 1935 to 1972 (SFVPSRRAGGRRVIENTDGSEEEMDARDSDFNGTKASE). T1951 carries the phosphothreonine modification. A phosphoserine mark is found at S1954 and S1971.

It belongs to the TRAFAC class myosin-kinesin ATPase superfamily. Myosin family. Muscle myosin is a hexameric protein that consists of 2 heavy chain subunits (MHC), 2 alkali light chain subunits (MLC) and 2 regulatory light chain subunits (MLC-2).

The protein resides in the melanosome. It is found in the cytoplasm. It localises to the myofibril. Functionally, muscle contraction. The chain is Myosin-11 (Myh11) from Mus musculus (Mouse).